The primary structure comprises 130 residues: Small ribosomal subunit protein uS9 (130 aa).

Belongs to the universal ribosomal protein uS9 family.

The polypeptide is Small ribosomal subunit protein uS9 (Xanthomonas axonopodis pv. citri (strain 306)).